A 130-amino-acid polypeptide reads, in one-letter code: Fumarate reductase subunit C (130 aa).

The next 3 membrane-spanning stretches (helical) occupy residues 37-57, 60-80, and 109-129; these read VWFS…PAGW, FVGF…LLAA, and VIKA…AVAL.

This sequence belongs to the FrdC family. In terms of assembly, part of an enzyme complex containing four subunits: a flavoprotein (FrdA), an iron-sulfur protein (FrdB), and two hydrophobic anchor proteins (FrdC and FrdD).

The protein localises to the cell inner membrane. Functionally, two distinct, membrane-bound, FAD-containing enzymes are responsible for the catalysis of fumarate and succinate interconversion; fumarate reductase is used in anaerobic growth, and succinate dehydrogenase is used in aerobic growth. Anchors the catalytic components of the fumarate reductase complex to the cell inner membrane, binds quinones. This Yersinia enterocolitica serotype O:8 / biotype 1B (strain NCTC 13174 / 8081) protein is Fumarate reductase subunit C.